The primary structure comprises 111 residues: DNA-directed RNA polymerase subunit Rpo11 (111 aa).

Belongs to the archaeal Rpo11/eukaryotic RPB11/RPC19 RNA polymerase subunit family. Part of the RNA polymerase complex.

Its subcellular location is the cytoplasm. The catalysed reaction is RNA(n) + a ribonucleoside 5'-triphosphate = RNA(n+1) + diphosphate. DNA-dependent RNA polymerase (RNAP) catalyzes the transcription of DNA into RNA using the four ribonucleoside triphosphates as substrates. This Thermoplasma acidophilum (strain ATCC 25905 / DSM 1728 / JCM 9062 / NBRC 15155 / AMRC-C165) protein is DNA-directed RNA polymerase subunit Rpo11.